A 684-amino-acid polypeptide reads, in one-letter code: Cleavage and polyadenylation specificity factor subunit 3 (684 aa).

At Ser2 the chain carries N-acetylserine. 6 residues coordinate Zn(2+): His71, His73, Asp75, His76, His158, and Asp179. His396 serves as the catalytic Proton donor. His418 contacts Zn(2+). Residues Lys462, Lys465, and Lys545 each participate in a glycyl lysine isopeptide (Lys-Gly) (interchain with G-Cter in SUMO) cross-link. Ser659 carries the phosphoserine modification. Residue Thr681 is modified to Phosphothreonine.

Belongs to the metallo-beta-lactamase superfamily. RNA-metabolizing metallo-beta-lactamase-like family. CPSF3 subfamily. Component of the cleavage and polyadenylation specificity factor (CPSF) complex, composed of CPSF1, CPSF2, CPSF3, CPSF4 and FIP1L1. Interacts with CPSF2, CSTF2 and SYMPK. Interacts with TUT1; the interaction is direct and mediates the recruitment of the CPSF complex on the 3'UTR of pre-mRNAs. Interacts with WDR33. Interacts with ZC3H3. The cofactor is Zn(2+). Post-translationally, sumoylated on Lys-462, Lys-465 and Lys-545, preferentially by SUMO3.

It localises to the nucleus. In terms of biological role, component of the cleavage and polyadenylation specificity factor (CPSF) complex that plays a key role in pre-mRNA 3'-end formation, recognizing the AAUAAA signal sequence and interacting with poly(A) polymerase and other factors to bring about cleavage and poly(A) addition. Has endonuclease activity, and functions as an mRNA 3'-end-processing endonuclease. Also involved in the histone 3'-end pre-mRNA processing. U7 snRNP-dependent protein that induces both the 3'-endoribonucleolytic cleavage of histone pre-mRNAs and acts as a 5' to 3' exonuclease for degrading the subsequent downstream cleavage product (DCP) of mature histone mRNAs. Cleavage occurs after the 5'-ACCCA-3' sequence in the histone pre-mRNA leaving a 3'hydroxyl group on the upstream fragment containing the stem loop (SL) and 5' phosphate on the downstream cleavage product (DCP) starting with CU nucleotides. The U7-dependent 5' to 3' exonuclease activity is processive and degrades the DCP RNA substrate even after complete removal of the U7-binding site. Binds to the downstream cleavage product (DCP) of histone pre-mRNAs and the cleaved DCP RNA substrate in a U7 snRNP dependent manner. Required for entering/progressing through S-phase of the cell cycle. Required for the selective processing of microRNAs (miRNAs) during embryonic stem cell differentiation via its interaction with ISY1. Required for the biogenesis of all miRNAs from the pri-miR-17-92 primary transcript except miR-92a. Only required for the biogenesis of miR-290 and miR-96 from the pri-miR-290-295 and pri-miR-96-183 primary transcripts, respectively. The polypeptide is Cleavage and polyadenylation specificity factor subunit 3 (CPSF3) (Homo sapiens (Human)).